The chain runs to 262 residues: Thiazole synthase (262 aa).

Lys104 serves as the catalytic Schiff-base intermediate with DXP. 1-deoxy-D-xylulose 5-phosphate is bound by residues Gly165, 191-192 (AG), and 213-214 (NT).

It belongs to the ThiG family. In terms of assembly, homotetramer. Forms heterodimers with either ThiH or ThiS.

It localises to the cytoplasm. The enzyme catalyses [ThiS sulfur-carrier protein]-C-terminal-Gly-aminoethanethioate + 2-iminoacetate + 1-deoxy-D-xylulose 5-phosphate = [ThiS sulfur-carrier protein]-C-terminal Gly-Gly + 2-[(2R,5Z)-2-carboxy-4-methylthiazol-5(2H)-ylidene]ethyl phosphate + 2 H2O + H(+). The protein operates within cofactor biosynthesis; thiamine diphosphate biosynthesis. Catalyzes the rearrangement of 1-deoxy-D-xylulose 5-phosphate (DXP) to produce the thiazole phosphate moiety of thiamine. Sulfur is provided by the thiocarboxylate moiety of the carrier protein ThiS. In vitro, sulfur can be provided by H(2)S. The protein is Thiazole synthase of Nitrosococcus oceani (strain ATCC 19707 / BCRC 17464 / JCM 30415 / NCIMB 11848 / C-107).